We begin with the raw amino-acid sequence, 36 residues long: Zinc metalloproteinase-disintegrin-like VaH1 (36 aa).

One can recognise a Peptidase M12B domain in the interval 1 to 36 (MVTKYSSIFMSPILSNPPILYFSDCSREXYQKXLTN).

The protein belongs to the venom metalloproteinase (M12B) family. P-III subfamily. P-IIIa sub-subfamily. Monomer. Zn(2+) is required as a cofactor. The N-terminus is blocked. Post-translationally, glycosylated. Expressed by the venom gland.

The protein localises to the secreted. With respect to regulation, inhibited by EDTA, but not inhibited by iodoacetamide, PMSF and pepstatin A. Functionally, snake venom zinc metalloprotease that exhibits strong hemorrhagic activity. It also degrades alpha-chain of fibrinogen (FGA), but not the beta- and the gamma-chains. Possesses potent azocaseinolytic activity and cleaves insulin B-chain, hydrolyzing it at positions Ala(14)-Leu(15), followed by Tyr(16)-Leu(17) and His(10)-Leu(11). In vivo, subcutaneous injection into mice induces strong hemorrhage. The polypeptide is Zinc metalloproteinase-disintegrin-like VaH1 (Vipera ammodytes ammodytes (Western sand viper)).